The primary structure comprises 396 residues: Putative nickel insertion protein (396 aa).

The segment at arginine 333–valine 355 is disordered.

It belongs to the LarC family.

This Rhodopirellula baltica (strain DSM 10527 / NCIMB 13988 / SH1) protein is Putative nickel insertion protein.